The chain runs to 291 residues: Lipoyl synthase (291 aa).

[4Fe-4S] cluster-binding residues include Cys-33, Cys-38, Cys-44, Cys-59, Cys-63, Cys-66, and Ser-274. One can recognise a Radical SAM core domain in the interval 45-263 (WGEGTATFLI…REAAEAMGFK (219 aa)).

Belongs to the radical SAM superfamily. Lipoyl synthase family. It depends on [4Fe-4S] cluster as a cofactor.

The protein resides in the cytoplasm. The catalysed reaction is [[Fe-S] cluster scaffold protein carrying a second [4Fe-4S](2+) cluster] + N(6)-octanoyl-L-lysyl-[protein] + 2 oxidized [2Fe-2S]-[ferredoxin] + 2 S-adenosyl-L-methionine + 4 H(+) = [[Fe-S] cluster scaffold protein] + N(6)-[(R)-dihydrolipoyl]-L-lysyl-[protein] + 4 Fe(3+) + 2 hydrogen sulfide + 2 5'-deoxyadenosine + 2 L-methionine + 2 reduced [2Fe-2S]-[ferredoxin]. The protein operates within protein modification; protein lipoylation via endogenous pathway; protein N(6)-(lipoyl)lysine from octanoyl-[acyl-carrier-protein]: step 2/2. Functionally, catalyzes the radical-mediated insertion of two sulfur atoms into the C-6 and C-8 positions of the octanoyl moiety bound to the lipoyl domains of lipoate-dependent enzymes, thereby converting the octanoylated domains into lipoylated derivatives. This chain is Lipoyl synthase, found in Pyrobaculum calidifontis (strain DSM 21063 / JCM 11548 / VA1).